A 371-amino-acid polypeptide reads, in one-letter code: Geranylgeranyl pyrophosphate synthase paxG (371 aa).

3 residues coordinate isopentenyl diphosphate: Lys89, Arg92, and His121. Positions 128 and 132 each coordinate Mg(2+). Arg137 lines the dimethylallyl diphosphate pocket. Residue Arg138 participates in isopentenyl diphosphate binding. Residues Lys215, Thr216, and Gln249 each contribute to the dimethylallyl diphosphate site. Asp252 lines the Mg(2+) pocket. Dimethylallyl diphosphate-binding residues include Asn256, Lys266, and Lys276. The Peroxisomal targeting signal motif lies at 369–371 (GRV).

The protein belongs to the FPP/GGPP synthase family. Mg(2+) is required as a cofactor.

The protein localises to the peroxisome. The catalysed reaction is isopentenyl diphosphate + dimethylallyl diphosphate = (2E)-geranyl diphosphate + diphosphate. It carries out the reaction isopentenyl diphosphate + (2E)-geranyl diphosphate = (2E,6E)-farnesyl diphosphate + diphosphate. It catalyses the reaction isopentenyl diphosphate + (2E,6E)-farnesyl diphosphate = (2E,6E,10E)-geranylgeranyl diphosphate + diphosphate. It participates in secondary metabolite biosynthesis. Functionally, geranylgeranyl pyrophosphate synthase; part of the gene cluster that mediates the biosynthesis of paxilline, a mycotoxin that acts as an inhibitor of mammalian maxi-K channels. PaxG, the geranylgeranyl diphosphate (GGPP) synthase is proposed to catalyze the first step in paxilline biosynthesis. Condensation of indole-3-glycerol phosphate with GGPP by paxC then forms 3-geranylgeranylindole (3-GGI), followed by epoxidation and cyclization of this intermediate (by paxM and paxB) to form paspaline. Paspaline is subsequently converted to 13-desoxypaxilline by paxP, the latter being then converted to paxilline by paxQ. Finally paxilline can be mono- and di-prenylated by paxD. The sequence is that of Geranylgeranyl pyrophosphate synthase paxG from Penicillium paxilli.